The sequence spans 488 residues: GTPase Der (488 aa).

EngA-type G domains are found at residues 3–166 (PVVA…AEAM) and 200–373 (IKLA…DSAT). GTP is bound by residues 9–16 (GRPNVGKS), 56–60 (DTGGI), 118–121 (NKVD), 206–213 (GKPNVGKS), 253–257 (DTAGV), and 318–321 (NKWD). One can recognise a KH-like domain in the interval 374 to 458 (RRVSTSMLTR…PIQLRFHEGD (85 aa)).

The protein belongs to the TRAFAC class TrmE-Era-EngA-EngB-Septin-like GTPase superfamily. EngA (Der) GTPase family. In terms of assembly, associates with the 50S ribosomal subunit.

In terms of biological role, GTPase that plays an essential role in the late steps of ribosome biogenesis. This Shewanella amazonensis (strain ATCC BAA-1098 / SB2B) protein is GTPase Der.